The primary structure comprises 310 residues: Oxygen-dependent coproporphyrinogen-III oxidase (310 aa).

Serine 92 is a binding site for substrate. 2 residues coordinate a divalent metal cation: histidine 96 and histidine 106. Histidine 106 functions as the Proton donor in the catalytic mechanism. Residue 108 to 110 (NVR) participates in substrate binding. Histidine 145 and histidine 175 together coordinate a divalent metal cation. The interval 240 to 275 (YVEFNLIWDRGTLFGLQSGGRTESILMSMPPLARWE) is important for dimerization. Residue 258 to 260 (GGR) participates in substrate binding.

This sequence belongs to the aerobic coproporphyrinogen-III oxidase family. As to quaternary structure, homodimer. A divalent metal cation serves as cofactor.

The protein localises to the cytoplasm. The catalysed reaction is coproporphyrinogen III + O2 + 2 H(+) = protoporphyrinogen IX + 2 CO2 + 2 H2O. Its pathway is porphyrin-containing compound metabolism; protoporphyrin-IX biosynthesis; protoporphyrinogen-IX from coproporphyrinogen-III (O2 route): step 1/1. Its function is as follows. Involved in the heme biosynthesis. Catalyzes the aerobic oxidative decarboxylation of propionate groups of rings A and B of coproporphyrinogen-III to yield the vinyl groups in protoporphyrinogen-IX. This chain is Oxygen-dependent coproporphyrinogen-III oxidase, found in Pectobacterium carotovorum subsp. carotovorum (strain PC1).